Reading from the N-terminus, the 1129-residue chain is MSVEAYGPSSQTLTFLDTEEAELLGADTQGSEFEFTDFTLPSQTQTPPGGPGGPGGGGAGGPGGAGAGAAAGQLDAQVGPEGILQNGAVDDSVAKTSQLLAELNFEEDEEDTYYTKDLPIHACSYCGIHDPACVVYCNTSKKWFCNGRGNTSGSHIVNHLVRAKCKEVTLHKDGPLGETVLECYNCGCRNVFLLGFIPAKADSVVVLLCRQPCASQSSLKDINWDSSQWQPLIQDRCFLSWLVKIPSEQEQLRARQITAQQINKLEELWKENPSATLEDLEKPGVDEEPQHVLLRYEDAYQYQNIFGPLVKLEADYDKKLKESQTQDNITVRWDLGLNKKRIAYFTLPKTDSGNEDLVIIWLRDMRLMQGDEICLRYKGDLAPLWKGIGHVIKVPDNYGDEIAIELRSSVGAPVEVTHNFQVDFVWKSTSFDRMQSALKTFAVDETSVSGYIYHKLLGHEVEDVIIKCQLPKRFTAQGLPDLNHSQVYAVKTVLQRPLSLIQGPPGTGKTVTSATIVYHLARQGNGPVLVCAPSNIAVDQLTEKIHQTGLKVVRLCAKSREAIDSPVSFLALHNQIRNMDSMPELQKLQQLKDETGELSSADEKRYRALKRTAERELLMNADVICCTCVGAGDPRLAKMQFRSILIDESTQATEPECMVPVVLGAKQLILVGDHCQLGPVVMCKKAAKAGLSQSLFERLVVLGIRPIRLQVQYRMHPALSAFPSNIFYEGSLQNGVTAADRVKKGFDFQWPQPDKPMFFYVTQGQEEIASSGTSYLNRTEAANVEKITTKLLKAGAKPDQIGIITPYEGQRSYLVQYMQFSGSLHTKLYQEVEIASVDAFQGREKDFIILSCVRANEHQGIGFLNDPRRLNVALTRARYGVIIVGNPKALSKQPLWNHLLNYYKEQKVLVEGPLNNLRESLMQFSKPRKLVNTINPGARFMTTAMYDAREAIIPGSVYDRSSQGRPSSMYFQTHDQIGMISAGPSHVAAMNIPIPFNLVMPPMPPPGYFGQANGPAAGRGTPKGKTGRGGRQKNRFGLPGPSQTNLPNSQASQDVASQPFSQGALTQGYISMSQPSQMSQPGLSQPELSQDSYLGDEFKSQIDVALSQDSTYQGERAYQHGGVTGLSQY.

A sufficient for interaction with RENT2 region spans residues 1–415 (MSVEAYGPSS…LRSSVGAPVE (415 aa)). A phosphoserine mark is found at serine 10 and serine 31. The tract at residues 39–70 (TLPSQTQTPPGGPGGPGGGGAGGPGGAGAGAA) is disordered. A compositionally biased stretch (gly residues) spans 52–69 (GGPGGGGAGGPGGAGAGA). Residues 115 to 272 (TKDLPIHACS…NKLEELWKEN (158 aa)) form the Upf1 CH-rich domain. Positions 123, 126, 137, 140, 145, 155, 159, 165, 183, 186, 209, and 213 each coordinate Zn(2+). A C3H region spans residues 123-155 (CSYCGIHDPACVVYCNTSKKWFCNGRGNTSGSH). Residues 137 to 165 (CNTSKKWFCNGRGNTSGSHIVNHLVRAKC) are CC/SHH/C. A C4 region spans residues 183-213 (CYNCGCRNVFLLGFIPAKADSVVVLLCRQPC). ATP contacts are provided by residues glutamine 486 and 506 to 510 (GTGKT). Serine 565 bears the Phosphoserine mark. The ATP site is built by glutamine 676, tyrosine 713, and glutamate 844. Serine 956 bears the Phosphoserine mark. Disordered stretches follow at residues 1009-1058 (FGQA…VASQ) and 1073-1096 (SQPS…YLGD). The residue at position 1019 (arginine 1019) is an Omega-N-methylarginine. The segment covering 1025–1034 (KTGRGGRQKN) has biased composition (basic residues). A compositionally biased stretch (polar residues) spans 1041 to 1058 (PSQTNLPNSQASQDVASQ). The segment covering 1073–1086 (SQPSQMSQPGLSQP) has biased composition (low complexity). Serine 1089, serine 1107, serine 1110, and serine 1127 each carry phosphoserine. Short sequence motifs ([ST]-Q motif) lie at residues 1089–1090 (SQ) and 1107–1108 (SQ). The tract at residues 1110–1129 (STYQGERAYQHGGVTGLSQY) is disordered.

This sequence belongs to the DNA2/NAM7 helicase family. Found in a post-splicing messenger ribonucleoprotein (mRNP) complex. Associates with the exon junction complex (EJC). Associates with the SGM1C complex; is phosphorylated by the complex kinase component SGM1. Part of a complex composed of SMG1, DHX34 and UPF1; within the complex DHX34 acts as a scaffolding protein to facilitate SMG1 phosphorylation of UPF1. Interacts with UPF2. Interacts with UPF3A and UPF3B. Interacts with EST1A. Interacts with SLBP. Interacts (when hyperphosphorylated) with PNRC2. Interacts with AGO1 and AGO2. Interacts with GSPT2. Interacts with isoform 1 and isoform 5 of ADAR/ADAR1. Interacts with SMG7. Interacts with ZC3H12A; this interaction occurs in a mRNA translationally active- and termination-dependent manner and is essential for ZC3H12A-mediated degradation of target mRNAs. Interacts with CPSF6. Interacts with MOV10; the interaction is direct and RNA-dependent. Interacts with SHFL; the interaction increases in the presence of RNA. Interacts with UPF2 and DDX4; interactions are mediated by TDRD6. Interacts with DHX34 and PABPC1/PABP1; the interactions are RNA-independent. Interacts with RBM46. As to quaternary structure, (Microbial infection) Interacts with human T-cell leukemia virus 1/HTLV-1 protein Tax; this interaction inhibits the host nonsense-mediated mRNA decay (NMD). Post-translationally, phosphorylated by SMG1; required for formation of mRNA surveillance complexes. As to expression, ubiquitous.

The protein localises to the cytoplasm. Its subcellular location is the P-body. The protein resides in the nucleus. It localises to the perinuclear region. It catalyses the reaction ATP + H2O = ADP + phosphate + H(+). Functionally, RNA-dependent helicase required for nonsense-mediated decay (NMD) of aberrant mRNAs containing premature stop codons and modulates the expression level of normal mRNAs. Is recruited to mRNAs upon translation termination and undergoes a cycle of phosphorylation and dephosphorylation; its phosphorylation appears to be a key step in NMD. Recruited by release factors to stalled ribosomes together with the SMG1C protein kinase complex to form the transient SURF (SMG1-UPF1-eRF1-eRF3) complex. In EJC-dependent NMD, the SURF complex associates with the exon junction complex (EJC) (located 50-55 or more nucleotides downstream from the termination codon) through UPF2 and allows the formation of an UPF1-UPF2-UPF3 surveillance complex which is believed to activate NMD. Phosphorylated UPF1 is recognized by EST1B/SMG5, SMG6 and SMG7 which are thought to provide a link to the mRNA degradation machinery involving exonucleolytic and endonucleolytic pathways, and to serve as adapters to protein phosphatase 2A (PP2A), thereby triggering UPF1 dephosphorylation and allowing the recycling of NMD factors. UPF1 can also activate NMD without UPF2 or UPF3, and in the absence of the NMD-enhancing downstream EJC indicative for alternative NMD pathways. Plays a role in replication-dependent histone mRNA degradation at the end of phase S; the function is independent of UPF2. For the recognition of premature termination codons (PTC) and initiation of NMD a competitive interaction between UPF1 and PABPC1 with the ribosome-bound release factors is proposed. The ATPase activity of UPF1 is required for disassembly of mRNPs undergoing NMD. Together with UPF2 and dependent on TDRD6, mediates the degradation of mRNA harboring long 3'UTR by inducing the NMD machinery. Also capable of unwinding double-stranded DNA and translocating on single-stranded DNA. This chain is Regulator of nonsense transcripts 1, found in Homo sapiens (Human).